The following is a 122-amino-acid chain: Glycine cleavage system H protein (122 aa).

Residues 19 to 101 enclose the Lipoyl-binding domain; the sequence is VATVGITDYA…QGKAWFFKIK (83 aa). Lys-60 carries the N6-lipoyllysine modification.

The protein belongs to the GcvH family. The glycine cleavage system is composed of four proteins: P, T, L and H. Requires (R)-lipoate as cofactor.

In terms of biological role, the glycine cleavage system catalyzes the degradation of glycine. The H protein shuttles the methylamine group of glycine from the P protein to the T protein. This chain is Glycine cleavage system H protein, found in Bradyrhizobium diazoefficiens (strain JCM 10833 / BCRC 13528 / IAM 13628 / NBRC 14792 / USDA 110).